The chain runs to 591 residues: MKMTTEEAFVKVLQMHGIEHAFGIIGSAMMPVSDLFPKAGIRFWDCAHETNAGMMADGFSRATGTMSMAIGQNGPGVTGFITAMKTAYWNHTPLLMVTPQAANKTIGQGGFQEVDQMAMFEEMVCYQEEVRDPSRIPEVLNRVIEKAWRGCAPAQINIPRDFWTQVIDVDLPRIVRFERPAGGPAAIAQAARLLSEAKFPVILNGAGVVIGNAIQESMALAEKLDAPVCCGYQHNDAFPGSHRLSVGPLGYNGSKAAMELISKADVVLALGTRLNPFSTLPGYGIDYWPKDAAIIQVDINADRIGLTKKVTVGICGDAKQVAQQILQQLAPAAGDASREERKALVHQTRSAWLQQLSSMDHEDDDPGTEWNVGARQREPDRMSPRQVWRAIQAVLPKEAIISTDIGNNCAIGNAYPSFEQGRKYLAPGMFGPCGYGFPSIVGAKIGCPDVPVVGFAGDGAFGISMNEMTSIGREGWPAITMVIFRNYQWGAEKRNTTLWYDNNFVGTELNPNLSYAKVADGCGLKGVTVDTPAALTEALAKAIEDQAKGITTFVEVVLNQELGEPFRRDAMKKPVAVAGIDRADMRTQRRM.

The tract at residues 359–383 is disordered; that stretch reads MDHEDDDPGTEWNVGARQREPDRMS.

It belongs to the TPP enzyme family. Mg(2+) is required as a cofactor. The cofactor is thiamine diphosphate.

The protein localises to the cytoplasm. It carries out the reaction acetyl phosphate + sulfite + H(+) = sulfoacetaldehyde + phosphate. Its pathway is organosulfur degradation; taurine degradation via aerobic pathway; acetyl phosphate and sulfite from taurine: step 2/2. This Rhizobium meliloti (strain 1021) (Ensifer meliloti) protein is Probable sulfoacetaldehyde acetyltransferase (xsc).